A 261-amino-acid chain; its full sequence is Adenosylcobinamide-GDP ribazoletransferase (261 aa).

A run of 5 helical transmembrane segments spans residues 12 to 32 (NLFF…WVVI), 46 to 66 (LVGL…QLIL), 67 to 87 (PASI…GAFH), 120 to 140 (GALS…ELAL), and 199 to 219 (IFVL…TLWL).

The protein belongs to the CobS family. The cofactor is Mg(2+).

The protein resides in the cell inner membrane. It catalyses the reaction alpha-ribazole + adenosylcob(III)inamide-GDP = adenosylcob(III)alamin + GMP + H(+). The catalysed reaction is alpha-ribazole 5'-phosphate + adenosylcob(III)inamide-GDP = adenosylcob(III)alamin 5'-phosphate + GMP + H(+). It participates in cofactor biosynthesis; adenosylcobalamin biosynthesis; adenosylcobalamin from cob(II)yrinate a,c-diamide: step 7/7. Joins adenosylcobinamide-GDP and alpha-ribazole to generate adenosylcobalamin (Ado-cobalamin). Also synthesizes adenosylcobalamin 5'-phosphate from adenosylcobinamide-GDP and alpha-ribazole 5'-phosphate. The protein is Adenosylcobinamide-GDP ribazoletransferase of Shewanella frigidimarina (strain NCIMB 400).